The chain runs to 143 residues: uncharacterized protein (143 aa).

This is an uncharacterized protein from Mycobacterium tuberculosis (strain CDC 1551 / Oshkosh).